The primary structure comprises 185 residues: Elongation factor P (185 aa).

This sequence belongs to the elongation factor P family.

Its subcellular location is the cytoplasm. The protein operates within protein biosynthesis; polypeptide chain elongation. Involved in peptide bond synthesis. Stimulates efficient translation and peptide-bond synthesis on native or reconstituted 70S ribosomes in vitro. Probably functions indirectly by altering the affinity of the ribosome for aminoacyl-tRNA, thus increasing their reactivity as acceptors for peptidyl transferase. The chain is Elongation factor P from Gloeothece citriformis (strain PCC 7424) (Cyanothece sp. (strain PCC 7424)).